We begin with the raw amino-acid sequence, 280 residues long: Diaminopimelate epimerase (280 aa).

Substrate contacts are provided by N11 and N64. C73 functions as the Proton donor in the catalytic mechanism. Substrate-binding positions include 74 to 75 (GN), N162, N195, and 213 to 214 (ER). The Proton acceptor role is filled by C222. Residue 223 to 224 (GT) participates in substrate binding.

Belongs to the diaminopimelate epimerase family. Homodimer.

It localises to the cytoplasm. The catalysed reaction is (2S,6S)-2,6-diaminopimelate = meso-2,6-diaminopimelate. It participates in amino-acid biosynthesis; L-lysine biosynthesis via DAP pathway; DL-2,6-diaminopimelate from LL-2,6-diaminopimelate: step 1/1. Its function is as follows. Catalyzes the stereoinversion of LL-2,6-diaminopimelate (L,L-DAP) to meso-diaminopimelate (meso-DAP), a precursor of L-lysine and an essential component of the bacterial peptidoglycan. The polypeptide is Diaminopimelate epimerase (Pelotomaculum thermopropionicum (strain DSM 13744 / JCM 10971 / SI)).